Here is a 235-residue protein sequence, read N- to C-terminus: Ribonuclease PH (235 aa).

Phosphate is bound by residues R86 and G124–R126.

This sequence belongs to the RNase PH family. Homohexameric ring arranged as a trimer of dimers.

It catalyses the reaction tRNA(n+1) + phosphate = tRNA(n) + a ribonucleoside 5'-diphosphate. In terms of biological role, phosphorolytic 3'-5' exoribonuclease that plays an important role in tRNA 3'-end maturation. Removes nucleotide residues following the 3'-CCA terminus of tRNAs; can also add nucleotides to the ends of RNA molecules by using nucleoside diphosphates as substrates, but this may not be physiologically important. Probably plays a role in initiation of 16S rRNA degradation (leading to ribosome degradation) during starvation. In Francisella tularensis subsp. tularensis (strain FSC 198), this protein is Ribonuclease PH.